The chain runs to 326 residues: Target of rapamycin complex subunit LST8 (326 aa).

The residue at position 1 (M1) is an N-acetylmethionine. WD repeat units lie at residues 1–37 (MNTT…CTRT), 40–80 (HQDS…PIIS), 83–122 (GVSK…LQCQ), 126–165 (QVNA…NEQL), and 168–207 (EPES…GDDV). T51 carries the post-translational modification Phosphothreonine. K86 participates in a covalent cross-link: Glycyl lysine isopeptide (Lys-Gly) (interchain with G-Cter in SUMO3). Glycyl lysine isopeptide (Lys-Gly) (interchain with G-Cter in SUMO3) cross-links involve residues K215, K245, and K261. One copy of the WD 6 repeat lies at 218-257 (AHTRYALQCRFSPDSTLLATCSADQTCKIWRTSNFSLMTE). Residues 268-309 (SSRGWMWGCAFSGDSQYIVTASSDNLARLWCVETGEIKREYG) form a WD 7 repeat. K305 is covalently cross-linked (Glycyl lysine isopeptide (Lys-Gly) (interchain with G-Cter in SUMO3); alternate). Residues K305 and K313 each participate in a glycyl lysine isopeptide (Lys-Gly) (interchain with G-Cter in ubiquitin); alternate cross-link. A Glycyl lysine isopeptide (Lys-Gly) (interchain with G-Cter in SUMO1); alternate cross-link involves residue K313.

Belongs to the WD repeat LST8 family. As to quaternary structure, part of the mechanistic target of rapamycin complex 1 (mTORC1) which contains MTOR, MLST8 and RPTOR. mTORC1 associates with AKT1S1/PRAS40, which inhibits its activity. mTORC1 binds to and is inhibited by FKBP12-rapamycin. Within mTORC1, interacts directly with MTOR and RPTOR. Component of the mechanistic target of rapamycin complex 2 (mTORC2), consisting in two heterotretramers composed of MTOR, MLST8, RICTOR and MAPKAP1/SIN1. Contrary to mTORC1, mTORC2 does not bind to and is not sensitive to FKBP12-rapamycin. mTORC1 and mTORC2 associate with DEPTOR, which regulates their activity. Interacts with RHEB. Interacts with MEAK7. Interacts with SIK3. Interacts with SLC38A7; this interaction promotes the recruitment of mTORC1 to the lysosome and its subsequent activation. Phosphorylation at Thr-51 by CDK1 promotes ubiquitination by the SCF(FBXW7) complex, followed by degradation. Post-translationally, ubiquitination by the SCF(FBXW7) and SCF(FBXW11) complexes following phosphorylation at Thr-51 by CDK1, leads to its degradation by the proteasome. Ubiquitination at Lys-305 and Lys-313 by TRAF2 via 'Lys-63'-linked polyubiquitin chains inhibits formation of the mTORC2 complex, while promoting formation of the mTORC1 complex: ubiquitination disrupts the interaction between MLST8 and MAPKAP1/SIN1 to favor mTORC1 assembly. Deubiquitination at Lys-305 and Lys-313 by OTUD7B promotes MLST8 interaction with MAPKAP1/SIN1, facilitating mTORC2 assembly. In terms of processing, sumoylation with SUMO1, SUMO2 and SUMO3 promotes assembly of both mTORC1 and mTORC2 complexes.

The protein localises to the lysosome membrane. Its subcellular location is the cytoplasm. Subunit of both mTORC1 and mTORC2, which regulates cell growth and survival in response to nutrient and hormonal signals. mTORC1 is activated in response to growth factors or amino acids. In response to nutrients, mTORC1 is recruited to the lysosome membrane and promotes protein, lipid and nucleotide synthesis by phosphorylating several substrates, such as ribosomal protein S6 kinase (RPS6KB1 and RPS6KB2) and EIF4EBP1 (4E-BP1). In the same time, it inhibits catabolic pathways by phosphorylating the autophagy initiation components ULK1 and ATG13, as well as transcription factor TFEB, a master regulators of lysosomal biogenesis and autophagy. The mTORC1 complex is inhibited in response to starvation and amino acid depletion. Within mTORC1, MLST8 interacts directly with MTOR and enhances its kinase activity. In nutrient-poor conditions, stabilizes the MTOR-RPTOR interaction and favors RPTOR-mediated inhibition of MTOR activity. As part of the mTORC2 complex, transduces signals from growth factors to pathways involved in proliferation, cytoskeletal organization, lipogenesis and anabolic output. mTORC2 is also activated by growth factors, but seems to be nutrient-insensitive. In response to growth factors, mTORC2 phosphorylates and activates AGC protein kinase family members, including AKT (AKT1, AKT2 and AKT3), PKC (PRKCA, PRKCB and PRKCE) and SGK1. mTORC2 functions upstream of Rho GTPases to regulate the actin cytoskeleton, probably by activating one or more Rho-type guanine nucleotide exchange factors. mTORC2 promotes the serum-induced formation of stress-fibers or F-actin. mTORC2 plays a critical role in AKT1 activation by mediating phosphorylation of different sites depending on the context, such as 'Thr-450', 'Ser-473', 'Ser-477' or 'Thr-479', facilitating the phosphorylation of the activation loop of AKT1 on 'Thr-308' by PDPK1/PDK1 which is a prerequisite for full activation. mTORC2 regulates the phosphorylation of SGK1 at 'Ser-422'. mTORC2 also modulates the phosphorylation of PRKCA on 'Ser-657'. Within mTORC2, MLST8 acts as a bridge between MAPKAP1/SIN1 and MTOR. This is Target of rapamycin complex subunit LST8 from Mus musculus (Mouse).